The primary structure comprises 345 residues: Probable RuBisCO transcriptional regulator (345 aa).

One can recognise an HTH lysR-type domain in the interval 6–63; sequence FTLDQLRILKAIASEGSFKRAADTLYVSQPAVSLQVQNLEKQLSVPLFDRGGRKAQLT. The segment at residues 23–42 is a DNA-binding region (H-T-H motif); the sequence is FKRAADTLYVSQPAVSLQVQ. A disordered region spans residues 311–345; that stretch reads LDPERLFANPYSSNNGDRQGDGKDGKGSIEIDSVT. Residues 328–339 show a composition bias toward basic and acidic residues; sequence RQGDGKDGKGSI.

This sequence belongs to the LysR transcriptional regulatory family.

Functionally, trans-acting transcriptional regulator of RuBisCO genes (rbcL and rbcS) expression. This Synechocystis sp. (strain ATCC 27184 / PCC 6803 / Kazusa) protein is Probable RuBisCO transcriptional regulator (rbcR).